We begin with the raw amino-acid sequence, 65 residues long: Large ribosomal subunit protein bL35 (65 aa).

This sequence belongs to the bacterial ribosomal protein bL35 family.

The polypeptide is Large ribosomal subunit protein bL35 (Paraburkholderia phytofirmans (strain DSM 17436 / LMG 22146 / PsJN) (Burkholderia phytofirmans)).